We begin with the raw amino-acid sequence, 211 residues long: 3,4-dihydroxy-2-butanone 4-phosphate synthase (211 aa).

D-ribulose 5-phosphate contacts are provided by residues 37–38 (RE), Asp-42, 150–154 (RGGHT), and Glu-174. Residue Glu-38 participates in Mg(2+) binding. His-153 contacts Mg(2+).

The protein belongs to the DHBP synthase family. In terms of assembly, homodimer. Requires Mg(2+) as cofactor. The cofactor is Mn(2+).

The catalysed reaction is D-ribulose 5-phosphate = (2S)-2-hydroxy-3-oxobutyl phosphate + formate + H(+). The protein operates within cofactor biosynthesis; riboflavin biosynthesis; 2-hydroxy-3-oxobutyl phosphate from D-ribulose 5-phosphate: step 1/1. In terms of biological role, catalyzes the conversion of D-ribulose 5-phosphate to formate and 3,4-dihydroxy-2-butanone 4-phosphate. The polypeptide is 3,4-dihydroxy-2-butanone 4-phosphate synthase (Baumannia cicadellinicola subsp. Homalodisca coagulata).